The chain runs to 477 residues: Ribulose bisphosphate carboxylase large chain (477 aa).

The propeptide occupies 1–2; it reads MS. N-acetylproline is present on Pro3. N6,N6,N6-trimethyllysine is present on Lys14. Substrate-binding residues include Asn123 and Thr173. The active-site Proton acceptor is the Lys175. Position 177 (Lys177) interacts with substrate. Residues Lys201, Asp203, and Glu204 each contribute to the Mg(2+) site. Lys201 bears the N6-carboxylysine mark. The active-site Proton acceptor is His294. Substrate contacts are provided by Arg295, His327, and Ser379.

Belongs to the RuBisCO large chain family. Type I subfamily. Heterohexadecamer of 8 large chains and 8 small chains; disulfide-linked. The disulfide link is formed within the large subunit homodimers. Mg(2+) is required as a cofactor. The disulfide bond which can form in the large chain dimeric partners within the hexadecamer appears to be associated with oxidative stress and protein turnover.

The protein localises to the plastid. It localises to the chloroplast. The enzyme catalyses 2 (2R)-3-phosphoglycerate + 2 H(+) = D-ribulose 1,5-bisphosphate + CO2 + H2O. It catalyses the reaction D-ribulose 1,5-bisphosphate + O2 = 2-phosphoglycolate + (2R)-3-phosphoglycerate + 2 H(+). Functionally, ruBisCO catalyzes two reactions: the carboxylation of D-ribulose 1,5-bisphosphate, the primary event in carbon dioxide fixation, as well as the oxidative fragmentation of the pentose substrate in the photorespiration process. Both reactions occur simultaneously and in competition at the same active site. The sequence is that of Ribulose bisphosphate carboxylase large chain from Nicotiana sylvestris (Wood tobacco).